The following is a 402-amino-acid chain: Pentalenic acid synthase (402 aa).

The interval 1–28 (MTEPGTSVSAPVAFPQDRTCPYDPPTAY) is disordered. Cysteine 351 is a heme binding site.

The protein belongs to the cytochrome P450 family. The cofactor is heme.

The catalysed reaction is 1-deoxypentalenate + reduced 2[4Fe-4S]-[ferredoxin] + O2 + 2 H(+) = pentalenate + oxidized 2[4Fe-4S]-[ferredoxin] + H2O. It functions in the pathway antibiotic biosynthesis; neopentalenolactone biosynthesis. Catalyzes the conversion of 1-deoxypentalenic acid to pentalenic acid in the biosynthesis of neopentalenolactone antibiotic. The protein is Pentalenic acid synthase (cyp28) of Streptomyces avermitilis (strain ATCC 31267 / DSM 46492 / JCM 5070 / NBRC 14893 / NCIMB 12804 / NRRL 8165 / MA-4680).